The primary structure comprises 349 residues: Green-sensitive opsin-1 (349 aa).

The Extracellular portion of the chain corresponds to 1-36 (MNGTEGKNFYVPMSNRTGLVRSPFEYPQYYLAEPWQ). Residues N2 and N15 are each glycosylated (N-linked (GlcNAc...) asparagine). The helical transmembrane segment at 37 to 61 (FKILALYLFFLMSMGLPINGLTLVV) threads the bilayer. The Cytoplasmic portion of the chain corresponds to 62–73 (TAQHKKLRQPLN). The helical transmembrane segment at 74–99 (FILVNLAVAGTIMVCFGFTVTFYTAI) threads the bilayer. At 100 to 113 (NGYFVLGPTGCAVE) the chain is on the extracellular side. C110 and C187 are oxidised to a cystine. A helical membrane pass occupies residues 114-133 (GFMATLGGEVALWSLVVLAI). The Cytoplasmic portion of the chain corresponds to 134-152 (ERYIVVCKPMGSFKFSSSH). The helical transmembrane segment at 153-176 (AFAGIAFTWVMALACAAPPLFGWS) threads the bilayer. Over 177-202 (RYIPEGMQCSCGPDYYTLNPDYNNES) the chain is Extracellular. A helical membrane pass occupies residues 203–230 (YVIYMFVCHFILPVAVIFFTYGRLVCTV). The Cytoplasmic segment spans residues 231-252 (KAAAAQQQDSASTQKAEREVTK). A helical membrane pass occupies residues 253–276 (MVILMVFGFLIAWTPYATVAAWIF). Residues 277–284 (FNKGADFS) lie on the Extracellular side of the membrane. Residues 285–309 (AKFMAIPAFFSKSSALYNPVIYVLL) traverse the membrane as a helical segment. K296 carries the post-translational modification N6-(retinylidene)lysine. Topologically, residues 310-349 (NKQFRNCMLTTIFCGKNPLGDDESSTVSTSKTEVSSVSPA) are cytoplasmic. Residues 329-349 (GDDESSTVSTSKTEVSSVSPA) are disordered. The segment covering 334 to 349 (STVSTSKTEVSSVSPA) has biased composition (low complexity).

The protein belongs to the G-protein coupled receptor 1 family. Opsin subfamily. Post-translationally, phosphorylated on some or all of the serine and threonine residues present in the C-terminal region. The color pigments are found in the cone photoreceptor cells.

It localises to the membrane. Visual pigments are the light-absorbing molecules that mediate vision. They consist of an apoprotein, opsin, covalently linked to cis-retinal. This chain is Green-sensitive opsin-1, found in Carassius auratus (Goldfish).